A 315-amino-acid polypeptide reads, in one-letter code: Tyrosine recombinase XerC (315 aa).

In terms of domain architecture, Core-binding (CB) spans 1–103; that stretch reads MITSFYAFLD…AIKSFARFCV (103 aa). Residues 124–306 form the Tyr recombinase domain; sequence ELPSPLTYEQ…SMKLKKQIHD (183 aa). Residues arginine 164, lysine 188, histidine 258, arginine 261, and histidine 284 contribute to the active site. Tyrosine 293 acts as the O-(3'-phospho-DNA)-tyrosine intermediate in catalysis.

Belongs to the 'phage' integrase family. XerC subfamily. In terms of assembly, forms a cyclic heterotetrameric complex composed of two molecules of XerC and two molecules of XerD.

The protein resides in the cytoplasm. Its function is as follows. Site-specific tyrosine recombinase, which acts by catalyzing the cutting and rejoining of the recombining DNA molecules. The XerC-XerD complex is essential to convert dimers of the bacterial chromosome into monomers to permit their segregation at cell division. It also contributes to the segregational stability of plasmids. This chain is Tyrosine recombinase XerC, found in Chlamydia trachomatis serovar L2b (strain UCH-1/proctitis).